Here is a 312-residue protein sequence, read N- to C-terminus: Ribosomal protein L11 methyltransferase (312 aa).

S-adenosyl-L-methionine contacts are provided by Thr159, Gly180, Asp201, and Asn244.

Belongs to the methyltransferase superfamily. PrmA family.

The protein localises to the cytoplasm. It catalyses the reaction L-lysyl-[protein] + 3 S-adenosyl-L-methionine = N(6),N(6),N(6)-trimethyl-L-lysyl-[protein] + 3 S-adenosyl-L-homocysteine + 3 H(+). Methylates ribosomal protein L11. The protein is Ribosomal protein L11 methyltransferase of Desulfitobacterium hafniense (strain DSM 10664 / DCB-2).